Here is a 340-residue protein sequence, read N- to C-terminus: 4-dimethylallyltryptophan N-methyltransferase easF (340 aa).

Belongs to the methyltransferase superfamily. In terms of assembly, homodimer.

It carries out the reaction 4-(3-methylbut-2-enyl)-L-tryptophan + S-adenosyl-L-methionine = 4-(3-methylbut-2-enyl)-L-abrine + S-adenosyl-L-homocysteine + H(+). It participates in alkaloid biosynthesis; ergot alkaloid biosynthesis. 4-dimethylallyltryptophan N-methyltransferase; part of the gene cluster that mediates the biosynthesis of fungal ergot alkaloid. DmaW catalyzes the first step of ergot alkaloid biosynthesis by condensing dimethylallyl diphosphate (DMAP) and tryptophan to form 4-dimethylallyl-L-tryptophan. The second step is catalyzed by the methyltransferase easF that methylates 4-dimethylallyl-L-tryptophan in the presence of S-adenosyl-L-methionine, resulting in the formation of 4-dimethylallyl-L-abrine. The catalase easC and the FAD-dependent oxidoreductase easE then transform 4-dimethylallyl-L-abrine to chanoclavine-I which is further oxidized by easD in the presence of NAD(+), resulting in the formation of chanoclavine-I aldehyde. Chanoclavine-I aldehyde is the precursor of ergoamides and ergopeptines in Clavicipitaceae, and clavine-type alcaloids such as fumiclavine in Trichocomaceae. However, the metabolites downstream of chanoclavine-I aldehyde in Arthrodermataceae have not been identified yet. The protein is 4-dimethylallyltryptophan N-methyltransferase easF of Arthroderma benhamiae (strain ATCC MYA-4681 / CBS 112371) (Trichophyton mentagrophytes).